The primary structure comprises 361 residues: 3,6-anhydro-alpha-L-galactonate cycloisomerase (361 aa).

Lysine 166 serves as the catalytic Proton acceptor. Residues aspartate 195, glutamate 221, and glutamate 247 each coordinate Mg(2+). Histidine 297 serves as the catalytic Proton donor/acceptor.

The protein belongs to the mandelate racemase/muconate lactonizing enzyme family. It depends on Mg(2+) as a cofactor.

It catalyses the reaction 3,6-anhydro-L-galactonate = 2-dehydro-3-deoxy-L-galactonate. Its function is as follows. Involved in the degradation of 3,6-anhydro-L-galactose, which is the major monomeric sugar of red macroalgae. Catalyzes the isomerization of 3,6-anhydrogalactonate (AHGA) to 2-keto-3-deoxy-galactonate (KDGal). The chain is 3,6-anhydro-alpha-L-galactonate cycloisomerase from Streptomyces coelicolor (strain ATCC BAA-471 / A3(2) / M145).